Consider the following 452-residue polypeptide: Keratin, type II cytoskeletal 80 (452 aa).

The interval 1 to 82 is head; the sequence is MAYRSCVVGF…DPAVQQQKNQ (82 aa). The residue at position 45 (Ser45) is a Phosphoserine. Residues 82 to 118 form a coil 1A region; the sequence is QEKEEMKALNDKFASLIGKVQALEQRNQLLETRWSFL. Positions 83-394 constitute an IF rod domain; sequence EKEEMKALND…KLMEGEESRM (312 aa). The linker 1 stretch occupies residues 119-135; that stretch reads QGQGSATFDLSHHYETF. Residues 136-227 are coil 1B; the sequence is QGRLQEELRK…TVYEQELKDL (92 aa). Residues 228–251 form a linker 12 region; it reads TAQVKDVSVTVGLDSRCHIDLSGI. The segment at 252-390 is coil 2; that stretch reads VEEVKAQYDA…ATYHKLMEGE (139 aa). Positions 391 to 452 are tail; sequence ESRMDLPSAT…YLSQESEASE (62 aa). Residues 412-452 form a disordered region; that stretch reads TASKSGLTKTSSRKKKNRRGPVIKITEMSEKYLSQESEASE. Residues 422 to 432 show a composition bias toward basic residues; that stretch reads SSRKKKNRRGP. Residues 443 to 452 show a composition bias toward polar residues; sequence YLSQESEASE.

This sequence belongs to the intermediate filament family. Heterotetramer of two type I and two type II keratins.

The chain is Keratin, type II cytoskeletal 80 (Krt80) from Mus musculus (Mouse).